The following is a 253-amino-acid chain: DNA polymerase sliding clamp (253 aa).

The protein belongs to the PCNA family. Homotrimer. The subunits circularize to form a toroid; DNA passes through its center. Replication factor C (RFC) is required to load the toroid on the DNA.

Sliding clamp subunit that acts as a moving platform for DNA processing. Responsible for tethering the catalytic subunit of DNA polymerase and other proteins to DNA during high-speed replication. This Methanopyrus kandleri (strain AV19 / DSM 6324 / JCM 9639 / NBRC 100938) protein is DNA polymerase sliding clamp.